Consider the following 1000-residue polypeptide: Vacuolar sorting protein 39 (1000 aa).

Residues 16–282 form the CNH domain; sequence PARIDAVESY…RRLVKSNNAV (267 aa). Residues 394-413 form a disordered region; it reads DEASLSRGSSGISDDMESSS. A CHCR repeat occupies 607 to 796; sequence YSMLVLESCP…YLNPKKSAKD (190 aa). The interval 844-864 is disordered; the sequence is GLSSSTDSGRSDVDTEEPLEE.

Belongs to the VAM6/VPS39 family. Homooligomer. Component of the homotypic fusion and vacuole protein sorting (HOPS) complex composed of the class C Vps core proteins VPS11, VCL1, VPS18 and VPS33, which in HOPS further associates with VPS39 and VPS41. Interacts directly with VPS11. Binds to RABG3B.

The protein localises to the cytoplasm. Its subcellular location is the vacuole membrane. Functionally, essential protein required during embryogenesis. Believed to act in part as a component of the putative HOPS endosomal tethering complex. HOPS is required for the central vacuole formation. May play a role in clustering and fusion of late endosomes and lysosomes. Plays a role in vesicle-mediated protein trafficking to lysosomal compartments including the endocytic membrane transport and autophagic pathways. Required for fusion of endosomes and autophagosomes with lysosomes. The sequence is that of Vacuolar sorting protein 39 from Arabidopsis thaliana (Mouse-ear cress).